We begin with the raw amino-acid sequence, 314 residues long: Acetyl-coenzyme A carboxylase carboxyl transferase subunit alpha (314 aa).

Positions 32–289 (EIDMLEASLE…KSAFVAQLDS (258 aa)) constitute a CoA carboxyltransferase C-terminal domain.

Belongs to the AccA family. In terms of assembly, acetyl-CoA carboxylase is a heterohexamer composed of biotin carboxyl carrier protein (AccB), biotin carboxylase (AccC) and two subunits each of ACCase subunit alpha (AccA) and ACCase subunit beta (AccD).

The protein resides in the cytoplasm. It catalyses the reaction N(6)-carboxybiotinyl-L-lysyl-[protein] + acetyl-CoA = N(6)-biotinyl-L-lysyl-[protein] + malonyl-CoA. It functions in the pathway lipid metabolism; malonyl-CoA biosynthesis; malonyl-CoA from acetyl-CoA: step 1/1. In terms of biological role, component of the acetyl coenzyme A carboxylase (ACC) complex. First, biotin carboxylase catalyzes the carboxylation of biotin on its carrier protein (BCCP) and then the CO(2) group is transferred by the carboxyltransferase to acetyl-CoA to form malonyl-CoA. The protein is Acetyl-coenzyme A carboxylase carboxyl transferase subunit alpha of Staphylococcus aureus (strain NCTC 8325 / PS 47).